A 408-amino-acid chain; its full sequence is MSGGSADYNSREHGGPEGMDPDGVIESNWNEIVDNFDDMNLKESLLRGIYAYGFEKPSAIQQRAIIPCIKGYDVIAQAQSGTGKTATFAISILQQLEIEFKETQALVLAPTRELAQQIQKVILALGDYMGATCHACIGGTNVRNEMQKLQAEAPHIVVGTPGRVFDMLNRRYLSPKWIKMFVLDEADGMLSRGFKDQIYEIFQKLNTSIQVVLLSATMPTDVLEVTKKFMRDPIRILVKKEELTLEGIKQFYINVEREEWKLDTLCDLYETLTITQAVIFLNTRRKVDWLTEKMHARDFTVSALHGDMDQKERDVIMREFRSGSSRVLITTDLLARGIDVQQVSLVINYDLPTNRENYIHRIGRGGRFGRKGVAINFVTEEDKRILRDIETFYNTTVEEMPMNVADLI.

Residues 1–22 form a disordered region; sequence MSGGSADYNSREHGGPEGMDPD. Positions 34–62 match the Q motif motif; it reads DNFDDMNLKESLLRGIYAYGFEKPSAIQQ. The Helicase ATP-binding domain occupies 65–236; it reads IIPCIKGYDV…KKFMRDPIRI (172 aa). An ATP-binding site is contributed by 77–84; that stretch reads QAQSGTGK. Thr-160 carries the phosphothreonine modification. Residues 183 to 186 carry the DEAD box motif; sequence LDEA. In terms of domain architecture, Helicase C-terminal spans 247–408; that stretch reads GIKQFYINVE…EMPMNVADLI (162 aa).

Belongs to the DEAD box helicase family. eIF4A subfamily. EIF4F is a multi-subunit complex, the composition of which varies with external and internal environmental conditions. It is composed of at least EIF4A, EIF4E and EIF4G1/EIFFG3. Interacts with EIF4E. May interact with NOM1.

It catalyses the reaction ATP + H2O = ADP + phosphate + H(+). Its function is as follows. ATP-dependent RNA helicase which is a subunit of the eIF4F complex involved in cap recognition and is required for mRNA binding to ribosome. In the current model of translation initiation, eIF4A unwinds RNA secondary structures in the 5'-UTR of mRNAs which is necessary to allow efficient binding of the small ribosomal subunit, and subsequent scanning for the initiator codon. The polypeptide is Eukaryotic initiation factor 4A-II (EIF4A2) (Macaca fascicularis (Crab-eating macaque)).